We begin with the raw amino-acid sequence, 83 residues long: ATP synthase subunit c (83 aa).

Transmembrane regions (helical) follow at residues 10-30 and 52-72; these read IAVA…FGLL and MFIV…IALY.

Belongs to the ATPase C chain family. In terms of assembly, F-type ATPases have 2 components, F(1) - the catalytic core - and F(0) - the membrane proton channel. F(1) has five subunits: alpha(3), beta(3), gamma(1), delta(1), epsilon(1). F(0) has three main subunits: a(1), b(2) and c(10-14). The alpha and beta chains form an alternating ring which encloses part of the gamma chain. F(1) is attached to F(0) by a central stalk formed by the gamma and epsilon chains, while a peripheral stalk is formed by the delta and b chains.

Its subcellular location is the cell inner membrane. F(1)F(0) ATP synthase produces ATP from ADP in the presence of a proton or sodium gradient. F-type ATPases consist of two structural domains, F(1) containing the extramembraneous catalytic core and F(0) containing the membrane proton channel, linked together by a central stalk and a peripheral stalk. During catalysis, ATP synthesis in the catalytic domain of F(1) is coupled via a rotary mechanism of the central stalk subunits to proton translocation. Its function is as follows. Key component of the F(0) channel; it plays a direct role in translocation across the membrane. A homomeric c-ring of between 10-14 subunits forms the central stalk rotor element with the F(1) delta and epsilon subunits. The sequence is that of ATP synthase subunit c from Shewanella denitrificans (strain OS217 / ATCC BAA-1090 / DSM 15013).